A 137-amino-acid chain; its full sequence is Probable histone H2AXa (137 aa).

A compositionally biased stretch (gly residues) spans 1–10 (MSSSQGGGGR). The disordered stretch occupies residues 1 to 21 (MSSSQGGGGRGKAKTTKAVSR). At serine 134 the chain carries Phosphoserine; by ATM and ATR. The [ST]-Q motif signature appears at 134-135 (SQ).

It belongs to the histone H2A family. In terms of assembly, the nucleosome is a histone octamer containing two molecules each of H2A, H2B, H3 and H4 assembled in one H3-H4 heterotetramer and two H2A-H2B heterodimers. The octamer wraps approximately 147 bp of DNA. Interacts with numerous proteins required for DNA damage signaling and repair when phosphorylated on Ser-134. In terms of processing, phosphorylated to form H2AXS139ph (gamma-H2AX) in response to DNA double strand breaks (DSBs) generated by exogenous genotoxic agents and by stalled replication forks, and may also occur during meiotic recombination events. Phosphorylation can extend up to several thousand nucleosomes from the actual site of the DSB and may mark the surrounding chromatin for recruitment of proteins required for DNA damage signaling and repair. Widespread phosphorylation may also serve to amplify the damage signal or aid repair of persistent lesions. H2AXS139ph in response to ionizing radiation is mediated by ATM while defects in DNA replication induce H2AXS139ph subsequent to activation of ATR. Dephosphorylation of H2AXS139ph by PP2A is required for DNA DSB repair.

The protein resides in the nucleus. Its subcellular location is the chromosome. Its function is as follows. Variant histone H2A which replaces conventional H2A in a subset of nucleosomes. Nucleosomes wrap and compact DNA into chromatin, limiting DNA accessibility to the cellular machineries which require DNA as a template. Histones thereby play a central role in transcription regulation, DNA repair, DNA replication and chromosomal stability. DNA accessibility is regulated via a complex set of post-translational modifications of histones, also called histone code, and nucleosome remodeling. Required for checkpoint-mediated arrest of cell cycle progression in response to low doses of ionizing radiation and for efficient repair of DNA double strand breaks (DSBs) specifically when modified by C-terminal phosphorylation. In Oryza sativa subsp. indica (Rice), this protein is Probable histone H2AXa.